Reading from the N-terminus, the 260-residue chain is Large ribosomal subunit protein uL2 (260 aa).

The interval 1–24 (MGRVIRAQRKGAGSVFKSHTHHRK) is disordered.

The protein belongs to the universal ribosomal protein uL2 family.

The protein resides in the cytoplasm. The chain is Large ribosomal subunit protein uL2 (RPL8) from Solanum lycopersicum (Tomato).